A 219-amino-acid polypeptide reads, in one-letter code: Small ribosomal subunit protein uS5 (219 aa).

The tract at residues 1–32 (MSHPQSRPGGRDGRPRRRREPREEAPWVPKTA) is disordered. The region spanning 68 to 131 (LKTEVVDVGI…NQALLNVGPI (64 aa)) is the S5 DRBM domain.

It belongs to the universal ribosomal protein uS5 family. As to quaternary structure, part of the 30S ribosomal subunit. Contacts protein S4.

Functionally, with S4 and S12 plays an important role in translational accuracy. This is Small ribosomal subunit protein uS5 (rps5) from Cenarchaeum symbiosum (strain A).